Reading from the N-terminus, the 1403-residue chain is Sushi, nidogen and EGF-like domain-containing protein 1 (1403 aa).

Positions Met1 to Ala24 are cleaved as a signal peptide. The 156-residue stretch at Ala103–Ala258 folds into the NIDO domain. EGF-like domains are found at residues Thr268–His309, Asp311–Glu347, and Ala349–Glu385. 18 disulfide bridges follow: Cys272–Cys284, Cys278–Cys297, Cys299–Cys308, Cys315–Cys326, Cys320–Cys335, Cys337–Cys346, Cys353–Cys364, Cys358–Cys373, Cys375–Cys384, Cys391–Cys402, Cys396–Cys411, Cys413–Cys422, Cys433–Cys444, Cys438–Cys453, Cys455–Cys464, Cys472–Cys480, Cys474–Cys488, and Cys490–Cys499. N-linked (GlcNAc...) asparagine glycosylation is present at Asn292. The 37-residue stretch at Asp387 to Glu423 folds into the EGF-like 4; calcium-binding domain. A glycan (N-linked (GlcNAc...) asparagine) is linked at Asn408. EGF-like domains are found at residues Val429–Arg465 and Ile468–Glu500. N-linked (GlcNAc...) asparagine glycosylation occurs at Asn484. The N-linked (GlcNAc...) asparagine glycan is linked to Asn536. EGF-like domains lie at Leu541–Glu577, Arg580–Glu616, Lys619–Glu655, and Ala657–Gln693. 26 disulfide bridges follow: Cys545–Cys556, Cys550–Cys565, Cys567–Cys576, Cys584–Cys595, Cys589–Cys604, Cys606–Cys615, Cys623–Cys634, Cys628–Cys643, Cys645–Cys654, Cys661–Cys672, Cys666–Cys681, Cys683–Cys692, Cys698–Cys739, Cys724–Cys751, Cys757–Cys768, Cys762–Cys777, Cys779–Cys788, Cys795–Cys806, Cys800–Cys815, Cys817–Cys826, Cys833–Cys844, Cys838–Cys853, Cys855–Cys864, Cys871–Cys882, Cys876–Cys891, and Cys893–Cys902. The region spanning Val696 to Glu753 is the Sushi domain. N-linked (GlcNAc...) asparagine glycosylation is present at Asn712. One can recognise an EGF-like 11; calcium-binding domain in the interval Glu753–Glu789. An EGF-like 12; calcium-binding domain is found at Glu791–Glu827. 2 EGF-like domains span residues Glu829 to Glu865 and Val867 to Thr903. N-linked (GlcNAc...) asparagine glycosylation is present at Asn886. Fibronectin type-III domains are found at residues Pro908–Arg1006, Pro1007–Leu1105, and Pro1106–Asp1200. Residues Asn977, Asn1015, Asn1109, Asn1139, and Asn1298 are each glycosylated (N-linked (GlcNAc...) asparagine). The segment at Leu1295–Thr1314 is disordered. Positions Ser1305–Thr1314 are enriched in polar residues. In terms of domain architecture, EGF-like 15 spans Thr1306 to Glu1342. Intrachain disulfides connect Cys1310–Cys1321, Cys1315–Cys1330, and Cys1332–Cys1341.

Post-translationally, phosphorylated on serine and threonine residues. In terms of processing, N-glycosylated. Expressed in liver.

It is found in the secreted. The protein resides in the extracellular space. The protein localises to the extracellular matrix. This is Sushi, nidogen and EGF-like domain-containing protein 1 from Rattus norvegicus (Rat).